A 99-amino-acid polypeptide reads, in one-letter code: PqqA binding protein (99 aa).

Belongs to the PqqD family. Monomer. Interacts with PqqE.

Its pathway is cofactor biosynthesis; pyrroloquinoline quinone biosynthesis. Functionally, functions as a PqqA binding protein and presents PqqA to PqqE, in the pyrroloquinoline quinone (PQQ) biosynthetic pathway. This is PqqA binding protein from Acinetobacter baylyi (strain ATCC 33305 / BD413 / ADP1).